The following is a 61-amino-acid chain: Sperm protamine P1 (61 aa).

Positions 1-61 (MARYRHSRSR…RRYHSHRRRY (61 aa)) are disordered.

The protein belongs to the protamine P1 family. Testis.

It localises to the nucleus. The protein localises to the chromosome. Its function is as follows. Protamines substitute for histones in the chromatin of sperm during the haploid phase of spermatogenesis. They compact sperm DNA into a highly condensed, stable and inactive complex. The polypeptide is Sperm protamine P1 (PRM1) (Notoryctes typhlops (Southern marsupial mole)).